The primary structure comprises 425 residues: Serine--tRNA ligase (425 aa).

Residue 230 to 232 (TAE) participates in L-serine binding. 261–263 (RAE) contributes to the ATP binding site. Glutamate 284 is an L-serine binding site. 348–351 (EISS) is a binding site for ATP. Serine 384 is a binding site for L-serine.

The protein belongs to the class-II aminoacyl-tRNA synthetase family. Type-1 seryl-tRNA synthetase subfamily. In terms of assembly, homodimer. The tRNA molecule binds across the dimer.

The protein localises to the cytoplasm. The enzyme catalyses tRNA(Ser) + L-serine + ATP = L-seryl-tRNA(Ser) + AMP + diphosphate + H(+). It carries out the reaction tRNA(Sec) + L-serine + ATP = L-seryl-tRNA(Sec) + AMP + diphosphate + H(+). It functions in the pathway aminoacyl-tRNA biosynthesis; selenocysteinyl-tRNA(Sec) biosynthesis; L-seryl-tRNA(Sec) from L-serine and tRNA(Sec): step 1/1. In terms of biological role, catalyzes the attachment of serine to tRNA(Ser). Is also able to aminoacylate tRNA(Sec) with serine, to form the misacylated tRNA L-seryl-tRNA(Sec), which will be further converted into selenocysteinyl-tRNA(Sec). This Zymomonas mobilis subsp. mobilis (strain ATCC 31821 / ZM4 / CP4) protein is Serine--tRNA ligase.